The primary structure comprises 353 residues: Phosphate acyltransferase (353 aa).

Belongs to the PlsX family. In terms of assembly, homodimer. Probably interacts with PlsY.

It localises to the cytoplasm. The enzyme catalyses a fatty acyl-[ACP] + phosphate = an acyl phosphate + holo-[ACP]. It functions in the pathway lipid metabolism; phospholipid metabolism. Its function is as follows. Catalyzes the reversible formation of acyl-phosphate (acyl-PO(4)) from acyl-[acyl-carrier-protein] (acyl-ACP). This enzyme utilizes acyl-ACP as fatty acyl donor, but not acyl-CoA. The chain is Phosphate acyltransferase from Ralstonia pickettii (strain 12J).